We begin with the raw amino-acid sequence, 194 residues long: PPE family protein PPE41 (194 aa).

The protein belongs to the mycobacterial PPE family. Forms a heterodimer with PE25. The dimer forms a 1:1:1 heterotrimeric complex with EspG5. PPE41 interacts directly with EspG5.

The protein resides in the secreted. The protein localises to the cell surface. The PE25/PPE41 dimer induces both a strong humoral and cellular immune response. The dimer induces necrosis, but not apoptosis, in mouse macrophage cells. It also induces activation and maturation of mouse dendritic cells and drives Th2-biased immune responses. The sequence is that of PPE family protein PPE41 from Mycobacterium tuberculosis (strain ATCC 25618 / H37Rv).